We begin with the raw amino-acid sequence, 160 residues long: Cytochrome b6-f complex subunit 4 (160 aa).

3 helical membrane passes run 36–56 (LLYI…GLAV), 95–115 (LLGI…PFIE), and 128–148 (IAMS…IGAC).

It belongs to the cytochrome b family. PetD subfamily. As to quaternary structure, the 4 large subunits of the cytochrome b6-f complex are cytochrome b6, subunit IV (17 kDa polypeptide, PetD), cytochrome f and the Rieske protein, while the 4 small subunits are PetG, PetL, PetM and PetN. The complex functions as a dimer.

It is found in the cellular thylakoid membrane. In terms of biological role, component of the cytochrome b6-f complex, which mediates electron transfer between photosystem II (PSII) and photosystem I (PSI), cyclic electron flow around PSI, and state transitions. This Prochlorococcus marinus (strain MIT 9312) protein is Cytochrome b6-f complex subunit 4.